We begin with the raw amino-acid sequence, 580 residues long: Probable mediator of RNA polymerase II transcription subunit 26a (580 aa).

A TFIIS N-terminal domain is found at aspartate 108 to tryptophan 183. 3 stretches are compositionally biased toward basic and acidic residues: residues arginine 244 to serine 255, glutamine 280 to proline 290, and valine 299 to arginine 309. Positions arginine 244–lysine 337 are disordered. Residues phenylalanine 347 to arginine 368 adopt a coiled-coil conformation.

Belongs to the Mediator complex subunit 26 family. As to quaternary structure, component of the Mediator complex.

It is found in the nucleus. Functionally, component of the Mediator complex, a coactivator involved in the regulated transcription of nearly all RNA polymerase II-dependent genes. Mediator functions as a bridge to convey information from gene-specific regulatory proteins to the basal RNA polymerase II transcription machinery. The Mediator complex, having a compact conformation in its free form, is recruited to promoters by direct interactions with regulatory proteins and serves for the assembly of a functional preinitiation complex with RNA polymerase II and the general transcription factors. May play a role in transcription elongation. The chain is Probable mediator of RNA polymerase II transcription subunit 26a (MED26A) from Arabidopsis thaliana (Mouse-ear cress).